We begin with the raw amino-acid sequence, 220 residues long: Ribosomal RNA large subunit methyltransferase E (220 aa).

The S-adenosyl-L-methionine site is built by Gly64, Trp66, Asp84, Asp100, and Asp125. The active-site Proton acceptor is the Lys165.

Belongs to the class I-like SAM-binding methyltransferase superfamily. RNA methyltransferase RlmE family.

It is found in the cytoplasm. The catalysed reaction is uridine(2552) in 23S rRNA + S-adenosyl-L-methionine = 2'-O-methyluridine(2552) in 23S rRNA + S-adenosyl-L-homocysteine + H(+). Functionally, specifically methylates the uridine in position 2552 of 23S rRNA at the 2'-O position of the ribose in the fully assembled 50S ribosomal subunit. This is Ribosomal RNA large subunit methyltransferase E from Thiobacillus denitrificans (strain ATCC 25259 / T1).